We begin with the raw amino-acid sequence, 144 residues long: 3-dehydroquinate dehydratase (144 aa).

Catalysis depends on tyrosine 22, which acts as the Proton acceptor. Substrate is bound by residues asparagine 71, histidine 77, and aspartate 84. Histidine 97 acts as the Proton donor in catalysis. Substrate-binding positions include 98–99 (IS) and arginine 108.

This sequence belongs to the type-II 3-dehydroquinase family. As to quaternary structure, homododecamer.

It carries out the reaction 3-dehydroquinate = 3-dehydroshikimate + H2O. The protein operates within metabolic intermediate biosynthesis; chorismate biosynthesis; chorismate from D-erythrose 4-phosphate and phosphoenolpyruvate: step 3/7. Functionally, catalyzes a trans-dehydration via an enolate intermediate. The protein is 3-dehydroquinate dehydratase of Thermotoga petrophila (strain ATCC BAA-488 / DSM 13995 / JCM 10881 / RKU-1).